The following is a 137-amino-acid chain: MLVPKRVKHRREFRGKMRGEAKGGKEVSFGEYGLQATTSSWITNRQIEAARIAMTRYMKRGGKVWIKIFPHKSYTAKAIGVRMGSGKGAPEGWVSPVKRGKVMFEIAGVSEEVAREAFRLAGHKLPVKVKFVKREAE.

The protein belongs to the universal ribosomal protein uL16 family. As to quaternary structure, part of the 50S ribosomal subunit.

In terms of biological role, binds 23S rRNA and is also seen to make contacts with the A and possibly P site tRNAs. This Streptococcus uberis (strain ATCC BAA-854 / 0140J) protein is Large ribosomal subunit protein uL16.